Here is a 523-residue protein sequence, read N- to C-terminus: DNA primase (523 aa).

The segment at 37–61 (CPFHAEKTPSFFVNPLQGYFYCFGC) adopts a CHC2-type zinc-finger fold. Residues 259 to 340 (KSVILVEGYI…NVSVVRMDFG (82 aa)) form the Toprim domain. Positions 265, 309, and 311 each coordinate Mg(2+).

This sequence belongs to the DnaG primase family. In terms of assembly, monomer. Interacts with DnaB. Zn(2+) serves as cofactor. Mg(2+) is required as a cofactor.

It carries out the reaction ssDNA + n NTP = ssDNA/pppN(pN)n-1 hybrid + (n-1) diphosphate.. Functionally, RNA polymerase that catalyzes the synthesis of short RNA molecules used as primers for DNA polymerase during DNA replication. This is DNA primase from Borreliella burgdorferi (strain ATCC 35210 / DSM 4680 / CIP 102532 / B31) (Borrelia burgdorferi).